A 212-amino-acid chain; its full sequence is Thymidylate kinase (212 aa).

11–18 (GPEGAGKT) is a binding site for ATP.

It belongs to the thymidylate kinase family.

The catalysed reaction is dTMP + ATP = dTDP + ADP. Functionally, phosphorylation of dTMP to form dTDP in both de novo and salvage pathways of dTTP synthesis. The polypeptide is Thymidylate kinase (Streptococcus pneumoniae (strain P1031)).